Reading from the N-terminus, the 159-residue chain is Protein-export protein SecB (159 aa).

This sequence belongs to the SecB family. In terms of assembly, homotetramer, a dimer of dimers. One homotetramer interacts with 1 SecA dimer.

The protein resides in the cytoplasm. Functionally, one of the proteins required for the normal export of preproteins out of the cell cytoplasm. It is a molecular chaperone that binds to a subset of precursor proteins, maintaining them in a translocation-competent state. It also specifically binds to its receptor SecA. In Hahella chejuensis (strain KCTC 2396), this protein is Protein-export protein SecB.